The chain runs to 1171 residues: Myosin-B/C (1171 aa).

The region spanning 105-780 (ETVDDIGYLP…AAKELSILQR (676 aa)) is the Myosin motor domain. 199–206 (GESGAGKT) serves as a coordination point for ATP. Residues 671–681 (AHFIRCLKPNE) are actin-binding. The tail stretch occupies residues 810–1171 (IHFLTRLESN…CFEACAPDRP (362 aa)).

This sequence belongs to the TRAFAC class myosin-kinesin ATPase superfamily. Myosin family.

The protein resides in the cytoplasm. Myosins are actin-based motor molecules with ATPase activity. Unconventional myosins serve in intracellular movements. Their highly divergent tails are presumed to bind to membranous compartments, which would be moved relative to actin filaments. Plays a role in proper daughter cell budding and separation. The protein is Myosin-B/C of Toxoplasma gondii.